The chain runs to 524 residues: Cytochrome P450 1A1 (524 aa).

The mitochondrial targeting signal stretch occupies residues 33–44 (LRTQVPKGLKTP). Ser71 is a glycosylation site (O-linked (GlcNAc) serine). A substrate-binding site is contributed by Phe228. Cys461 contacts heme.

The protein belongs to the cytochrome P450 family. Interacts with cytosolic chaperones HSP70 and HSP90; this interaction is required for initial targeting to mitochondria. Interacts (via mitochondrial targeting signal) with TOMM40 (via N-terminus); this interaction is required for translocation across the mitochondrial outer membrane. It depends on heme as a cofactor.

The protein localises to the endoplasmic reticulum membrane. The protein resides in the mitochondrion inner membrane. Its subcellular location is the microsome membrane. It is found in the cytoplasm. The enzyme catalyses an organic molecule + reduced [NADPH--hemoprotein reductase] + O2 = an alcohol + oxidized [NADPH--hemoprotein reductase] + H2O + H(+). It catalyses the reaction estrone + reduced [NADPH--hemoprotein reductase] + O2 = 2-hydroxyestrone + oxidized [NADPH--hemoprotein reductase] + H2O + H(+). It carries out the reaction estrone + reduced [NADPH--hemoprotein reductase] + O2 = 4-hydroxyestrone + oxidized [NADPH--hemoprotein reductase] + H2O + H(+). The catalysed reaction is estrone + reduced [NADPH--hemoprotein reductase] + O2 = 6alpha-hydroxyestrone + oxidized [NADPH--hemoprotein reductase] + H2O + H(+). The enzyme catalyses estrone + reduced [NADPH--hemoprotein reductase] + O2 = 15alpha-hydroxyestrone + oxidized [NADPH--hemoprotein reductase] + H2O + H(+). It catalyses the reaction estrone + reduced [NADPH--hemoprotein reductase] + O2 = 16alpha-hydroxyestrone + oxidized [NADPH--hemoprotein reductase] + H2O + H(+). It carries out the reaction 17beta-estradiol + reduced [NADPH--hemoprotein reductase] + O2 = 2-hydroxy-17beta-estradiol + oxidized [NADPH--hemoprotein reductase] + H2O + H(+). The catalysed reaction is 17beta-estradiol + reduced [NADPH--hemoprotein reductase] + O2 = 4-hydroxy-17beta-estradiol + oxidized [NADPH--hemoprotein reductase] + H2O + H(+). The enzyme catalyses 17beta-estradiol + reduced [NADPH--hemoprotein reductase] + O2 = 6alpha-hydroxy-17beta-estradiol + oxidized [NADPH--hemoprotein reductase] + H2O + H(+). It catalyses the reaction 17beta-estradiol + reduced [NADPH--hemoprotein reductase] + O2 = 7alpha-hydroxy-17beta-estradiol + oxidized [NADPH--hemoprotein reductase] + H2O + H(+). It carries out the reaction 17beta-estradiol + reduced [NADPH--hemoprotein reductase] + O2 = 15alpha-hydroxy-17beta-estradiol + oxidized [NADPH--hemoprotein reductase] + H2O + H(+). The catalysed reaction is (5Z,8Z,11Z)-eicosatrienoate + reduced [NADPH--hemoprotein reductase] + O2 = 19-hydroxy-(5Z,8Z,11Z)-eicosatrienoate + oxidized [NADPH--hemoprotein reductase] + H2O + H(+). The enzyme catalyses (5Z,8Z,11Z,14Z)-eicosatetraenoate + reduced [NADPH--hemoprotein reductase] + O2 = 16-hydroxy-(5Z,8Z,11Z,14Z)-eicosatetraenoate + oxidized [NADPH--hemoprotein reductase] + H2O + H(+). It catalyses the reaction (5Z,8Z,11Z,14Z)-eicosatetraenoate + reduced [NADPH--hemoprotein reductase] + O2 = 17-hydroxy-(5Z,8Z,11Z,14Z)-eicosatetraenoate + oxidized [NADPH--hemoprotein reductase] + H2O + H(+). It carries out the reaction (5Z,8Z,11Z,14Z)-eicosatetraenoate + reduced [NADPH--hemoprotein reductase] + O2 = 18-hydroxy-(5Z,8Z,11Z,14Z)-eicosatetraenoate + oxidized [NADPH--hemoprotein reductase] + H2O + H(+). The catalysed reaction is (5Z,8Z,11Z,14Z)-eicosatetraenoate + reduced [NADPH--hemoprotein reductase] + O2 = 19-hydroxy-(5Z,8Z,11Z,14Z)-eicosatetraenoate + oxidized [NADPH--hemoprotein reductase] + H2O + H(+). The enzyme catalyses (5Z,8Z,11Z,14Z,17Z)-eicosapentaenoate + reduced [NADPH--hemoprotein reductase] + O2 = 19-hydroxy-(5Z,8Z,11Z,14Z,17Z)-eicosapentaenoate + oxidized [NADPH--hemoprotein reductase] + H2O + H(+). It catalyses the reaction (5Z,8Z,11Z,14Z)-eicosatetraenoate + reduced [NADPH--hemoprotein reductase] + O2 = (8R,9S)-epoxy-(5Z,11Z,14Z)-eicosatrienoate + oxidized [NADPH--hemoprotein reductase] + H2O + H(+). It carries out the reaction (5Z,8Z,11Z,14Z)-eicosatetraenoate + reduced [NADPH--hemoprotein reductase] + O2 = (11R,12S)-epoxy-(5Z,8Z,14Z)-eicosatrienoate + oxidized [NADPH--hemoprotein reductase] + H2O + H(+). The catalysed reaction is (5Z,8Z,11Z,14Z)-eicosatetraenoate + reduced [NADPH--hemoprotein reductase] + O2 = (14S,15R)-epoxy-(5Z,8Z,11Z)-eicosatrienoate + oxidized [NADPH--hemoprotein reductase] + H2O + H(+). The enzyme catalyses (5Z,8Z,11Z,14Z)-eicosatetraenoate + reduced [NADPH--hemoprotein reductase] + O2 = (14R,15S)-epoxy-(5Z,8Z,11Z)-eicosatrienoate + oxidized [NADPH--hemoprotein reductase] + H2O + H(+). It catalyses the reaction (5Z,8Z,11Z,14Z,17Z)-eicosapentaenoate + reduced [NADPH--hemoprotein reductase] + O2 = (17R,18S)-epoxy-(5Z,8Z,11Z,14Z)-eicosatetraenoate + oxidized [NADPH--hemoprotein reductase] + H2O + H(+). It carries out the reaction (4Z,7Z,10Z,13Z,16Z,19Z)-docosahexaenoate + reduced [NADPH--hemoprotein reductase] + O2 = (19S,20R)-epoxy-(4Z,7Z,10Z,13Z,16Z)-docosapentaenoate + oxidized [NADPH--hemoprotein reductase] + H2O + H(+). The catalysed reaction is (4Z,7Z,10Z,13Z,16Z,19Z)-docosahexaenoate + reduced [NADPH--hemoprotein reductase] + O2 = (19R,20S)-epoxy-(4Z,7Z,10Z,13Z,16Z)-docosapentaenoate + oxidized [NADPH--hemoprotein reductase] + H2O + H(+). The enzyme catalyses all-trans-retinol + reduced [NADPH--hemoprotein reductase] + O2 = all-trans-retinal + oxidized [NADPH--hemoprotein reductase] + 2 H2O + H(+). It catalyses the reaction all-trans-retinal + reduced [NADPH--hemoprotein reductase] + O2 = all-trans-retinoate + oxidized [NADPH--hemoprotein reductase] + H2O + 2 H(+). It carries out the reaction (13S)-hydroperoxy-(9Z,11E)-octadecadienoate = 13-oxo-(9Z,11E)-octadecadienoate + H2O. The catalysed reaction is (12S)-hydroperoxy-(5Z,8Z,10E,14Z)-eicosatetraenoate = 12-oxo-(5Z,8Z,10E,14Z)-eicosatetraenoate + H2O. The enzyme catalyses (15S)-hydroperoxy-(5Z,8Z,11Z,13E)-eicosatetraenoate = 15-oxo-(5Z,8Z,11Z,13E)-eicosatetraenoate + H2O. It catalyses the reaction (5S)-hydroperoxy-(6E,8Z,11Z,14Z)-eicosatetraenoate = 5-oxo-(6E,8Z,11Z,14Z)-eicosatetraenoate + H2O. It functions in the pathway steroid hormone biosynthesis. Its pathway is lipid metabolism; fatty acid metabolism. The protein operates within cofactor metabolism; retinol metabolism. A cytochrome P450 monooxygenase involved in the metabolism of various endogenous substrates, including fatty acids, steroid hormones and vitamins. Mechanistically, uses molecular oxygen inserting one oxygen atom into a substrate, and reducing the second into a water molecule, with two electrons provided by NADPH via cytochrome P450 reductase (CPR; NADPH-ferrihemoprotein reductase). Catalyzes the hydroxylation of carbon-hydrogen bonds. Exhibits high catalytic activity for the formation of hydroxyestrogens from estrone (E1) and 17beta-estradiol (E2), namely 2-hydroxy E1 and E2, as well as D-ring hydroxylated E1 and E2 at the C15alpha and C16alpha positions. Displays different regioselectivities for polyunsaturated fatty acids (PUFA) hydroxylation. Catalyzes the epoxidation of double bonds of certain PUFA. Converts arachidonic acid toward epoxyeicosatrienoic acid (EET) regioisomers, 8,9-, 11,12-, and 14,15-EET, that function as lipid mediators in the vascular system. Displays an absolute stereoselectivity in the epoxidation of eicosapentaenoic acid (EPA) producing the 17(R),18(S) enantiomer. May play an important role in all-trans retinoic acid biosynthesis in extrahepatic tissues. Catalyzes two successive oxidative transformation of all-trans retinol to all-trans retinal and then to the active form all-trans retinoic acid. May also participate in eicosanoids metabolism by converting hydroperoxide species into oxo metabolites (lipoxygenase-like reaction, NADPH-independent). The protein is Cytochrome P450 1A1 (CYP1A1) of Mesocricetus auratus (Golden hamster).